A 1733-amino-acid polypeptide reads, in one-letter code: Protein NETWORKED 1D (1733 aa).

An NAB domain is found at 12–92 (YSWWWDSHIS…ERYDHATGVI (81 aa)). 4 coiled-coil regions span residues 195–816 (KEIN…RESS), 897–931 (LIAENQDIKEASKLLEKLVSELEEENIGKQVQIDS), 960–1043 (DENS…QKLI), and 1196–1386 (ARSA…NDLM). Residues 1456 to 1476 (LKTSSARRSRRRNGSLRKQNH) are disordered. Basic residues predominate over residues 1460-1470 (SARRSRRRNGS). Coiled-coil stretches lie at residues 1553–1627 (ANKR…KVQN) and 1653–1686 (SEQARRGSEKIGRLQLEIQRLQFLLLKLEGDRED). The interval 1628–1656 (GFERSDGSKSSMDLDENESSRRRRISEQA) is disordered.

This sequence belongs to the NET family.

In terms of biological role, plant-specific actin binding protein. May be part of a membrane-cytoskeletal adapter complex. The protein is Protein NETWORKED 1D of Arabidopsis thaliana (Mouse-ear cress).